Consider the following 759-residue polypeptide: Olfactomedin-like protein 2B (759 aa).

A signal peptide spans 1-20 (MAKSLLLVLCFALVTTLGWG). 2 coiled-coil regions span residues 40 to 68 (TEDE…KVKA) and 179 to 209 (KLEE…MNKR). N-linked (GlcNAc...) asparagine glycosylation is found at asparagine 187 and asparagine 213. Disordered regions lie at residues 346–396 (TRRP…VSAS) and 456–494 (THTA…EEED). The span at 356-396 (AAVTADAGTTSAGTPTTALPSARLPASTAAPSTPDPAVSAS) shows a compositional bias: low complexity. The Olfactomedin-like domain occupies 502–759 (RCKDTLSTIT…QVTYHVIFAY (258 aa)). A disulfide bond links cysteine 503 and cysteine 689. Asparagine 704 carries N-linked (GlcNAc...) asparagine glycosylation.

In terms of assembly, homodimer. Binds to heparin and chondroitin sulfate E. O-glycosylated and N-glycosylated.

It is found in the secreted. The chain is Olfactomedin-like protein 2B (OLFML2B) from Bos taurus (Bovine).